We begin with the raw amino-acid sequence, 231 residues long: Uracil-DNA glycosylase (231 aa).

Catalysis depends on aspartate 74, which acts as the Proton acceptor.

The protein belongs to the uracil-DNA glycosylase (UDG) superfamily. UNG family.

The protein localises to the cytoplasm. The enzyme catalyses Hydrolyzes single-stranded DNA or mismatched double-stranded DNA and polynucleotides, releasing free uracil.. Its function is as follows. Excises uracil residues from the DNA which can arise as a result of misincorporation of dUMP residues by DNA polymerase or due to deamination of cytosine. This Campylobacter jejuni subsp. jejuni serotype O:2 (strain ATCC 700819 / NCTC 11168) protein is Uracil-DNA glycosylase.